The chain runs to 379 residues: 1-deoxy-D-xylulose 5-phosphate reductoisomerase (379 aa).

5 residues coordinate NADPH: threonine 10, glycine 11, serine 12, valine 13, and asparagine 121. Position 122 (lysine 122) interacts with 1-deoxy-D-xylulose 5-phosphate. Residue glutamate 123 coordinates NADPH. Aspartate 147 provides a ligand contact to Mn(2+). 1-deoxy-D-xylulose 5-phosphate contacts are provided by serine 148, glutamate 149, serine 173, and histidine 196. Glutamate 149 is a Mn(2+) binding site. Position 202 (glycine 202) interacts with NADPH. Serine 209, asparagine 214, lysine 215, and glutamate 218 together coordinate 1-deoxy-D-xylulose 5-phosphate. Residue glutamate 218 coordinates Mn(2+).

It belongs to the DXR family. Requires Mg(2+) as cofactor. It depends on Mn(2+) as a cofactor.

It catalyses the reaction 2-C-methyl-D-erythritol 4-phosphate + NADP(+) = 1-deoxy-D-xylulose 5-phosphate + NADPH + H(+). The protein operates within isoprenoid biosynthesis; isopentenyl diphosphate biosynthesis via DXP pathway; isopentenyl diphosphate from 1-deoxy-D-xylulose 5-phosphate: step 1/6. Catalyzes the NADPH-dependent rearrangement and reduction of 1-deoxy-D-xylulose-5-phosphate (DXP) to 2-C-methyl-D-erythritol 4-phosphate (MEP). This is 1-deoxy-D-xylulose 5-phosphate reductoisomerase from Chlamydia abortus (strain DSM 27085 / S26/3) (Chlamydophila abortus).